The sequence spans 222 residues: von Willebrand factor C domain-containing protein 2-like (222 aa).

An N-terminal signal peptide occupies residues 1-21; it reads MALHIHEACILLLVIPGLVTS. 2 VWFC domains span residues 51–110 and 114–172; these read KGCV…PECK and NFCE…PVCK.

In terms of assembly, peripherally associated with AMPAR complex. AMPAR complex consists of an inner core made of 4 pore-forming GluA/GRIA proteins (GRIA1, GRIA2, GRIA3 and GRIA4) and 4 major auxiliary subunits arranged in a twofold symmetry. One of the two pairs of distinct binding sites is occupied either by CNIH2, CNIH3 or CACNG2, CACNG3. The other harbors CACNG2, CACNG3, CACNG4, CACNG8 or GSG1L. This inner core of AMPAR complex is complemented by outer core constituents binding directly to the GluA/GRIA proteins at sites distinct from the interaction sites of the inner core constituents. Outer core constituents include at least PRRT1, PRRT2, CKAMP44/SHISA9, FRRS1L and NRN1. The proteins of the inner and outer core serve as a platform for other, more peripherally associated AMPAR constituents, including VWC2L. Alone or in combination, these auxiliary subunits control the gating and pharmacology of the AMPAR complex and profoundly impact their biogenesis and protein processing. In terms of tissue distribution, predominantly expressed in the brain (at protein level). Also detected in bones, including femur and calvaria, heart, lung and kidney. Isoform 5 is predominant in lung and heart, compared to isoforms 1 and 3. Isoform 4 is expressed in femur and calvaria at higher levels than isoforms 1 and 5. Isoforms 1 and 4 are expressed at higher levels than isoform 5 in kidney and brain.

Its subcellular location is the secreted. It is found in the synapse. Functionally, may play a role in neurogenesis. May promote matrix mineralization, but has been shown to weakly, but significantly inhibit BMP2 and BMP6 activity in a preosteoblastic cell line. In Mus musculus (Mouse), this protein is von Willebrand factor C domain-containing protein 2-like (Vwc2l).